Consider the following 1020-residue polypeptide: Glycine dehydrogenase (decarboxylating), mitochondrial (1020 aa).

Residues 1–35 (MQSCARAWGLRLGRGVGGGRRLAGGSGPCWAPRSR) constitute a mitochondrion transit peptide. Positions 21–46 (RLAGGSGPCWAPRSRDSSSGGGDSAA) are disordered. K447, K514, K648, and K664 each carry N6-acetyllysine. N6-(pyridoxal phosphate)lysine is present on K754.

It belongs to the GcvP family. As to quaternary structure, homodimer. Interacts with GCSH. The glycine cleavage system is composed of four proteins: P (GLDC), T (GCST), L (DLD) and H (GCSH). Pyridoxal 5'-phosphate serves as cofactor.

It localises to the mitochondrion. It carries out the reaction N(6)-[(R)-lipoyl]-L-lysyl-[glycine-cleavage complex H protein] + glycine + H(+) = N(6)-[(R)-S(8)-aminomethyldihydrolipoyl]-L-lysyl-[glycine-cleavage complex H protein] + CO2. Stimulated by lipoic acid. Inhibited in presence of methylamine. The glycine cleavage system catalyzes the degradation of glycine. The P protein (GLDC) binds the alpha-amino group of glycine through its pyridoxal phosphate cofactor; CO(2) is released and the remaining methylamine moiety is then transferred to the lipoamide cofactor of the H protein (GCSH). The sequence is that of Glycine dehydrogenase (decarboxylating), mitochondrial from Homo sapiens (Human).